The chain runs to 363 residues: Phosphoserine aminotransferase (363 aa).

Arginine 42 contributes to the L-glutamate binding site. Pyridoxal 5'-phosphate-binding positions include 76–77, tryptophan 102, threonine 156, aspartate 175, and glutamine 198; that span reads GR. An N6-(pyridoxal phosphate)lysine modification is found at lysine 199. A pyridoxal 5'-phosphate-binding site is contributed by 240–241; the sequence is NT.

Belongs to the class-V pyridoxal-phosphate-dependent aminotransferase family. SerC subfamily. In terms of assembly, homodimer. Pyridoxal 5'-phosphate is required as a cofactor.

It is found in the cytoplasm. The catalysed reaction is O-phospho-L-serine + 2-oxoglutarate = 3-phosphooxypyruvate + L-glutamate. It catalyses the reaction 4-(phosphooxy)-L-threonine + 2-oxoglutarate = (R)-3-hydroxy-2-oxo-4-phosphooxybutanoate + L-glutamate. It participates in amino-acid biosynthesis; L-serine biosynthesis; L-serine from 3-phospho-D-glycerate: step 2/3. The protein operates within cofactor biosynthesis; pyridoxine 5'-phosphate biosynthesis; pyridoxine 5'-phosphate from D-erythrose 4-phosphate: step 3/5. Catalyzes the reversible conversion of 3-phosphohydroxypyruvate to phosphoserine and of 3-hydroxy-2-oxo-4-phosphonooxybutanoate to phosphohydroxythreonine. In Shewanella sp. (strain MR-4), this protein is Phosphoserine aminotransferase.